A 172-amino-acid chain; its full sequence is Translocon-associated protein subunit delta (172 aa).

An N-terminal signal peptide occupies residues 1–24; sequence MAALASLGALALLLLSGLSCCSEA. The cysteines at positions 25 and 56 are disulfide-linked. Residues 25 to 143 are Lumenal-facing; it reads CVEPQITPSY…SVDHRGTWNG (119 aa). A Glycyl lysine isopeptide (Lys-Gly) (interchain with G-Cter in ubiquitin) cross-link involves residue K72. Residues 144-164 form a helical membrane-spanning segment; sequence PWVSTEVLAAAIGLVIYYLAF. The Cytoplasmic segment spans residues 165 to 172; that stretch reads SAKSHIQA.

This sequence belongs to the TRAP-delta family. In terms of assembly, heterotetramer of TRAP-alpha, TRAP-beta, TRAP-delta and TRAP-gamma.

Its subcellular location is the endoplasmic reticulum membrane. In terms of biological role, TRAP proteins are part of a complex whose function is to bind calcium to the ER membrane and thereby regulate the retention of ER resident proteins. This chain is Translocon-associated protein subunit delta (SSR4), found in Bos taurus (Bovine).